The following is a 314-amino-acid chain: tRNA dimethylallyltransferase (314 aa).

Position 10-17 (10-17 (GPTAVGKT)) interacts with ATP. 12–17 (TAVGKT) provides a ligand contact to substrate. Interaction with substrate tRNA stretches follow at residues 35–38 (DSMQ), 160–164 (RRVIR), 239–244 (QAIGYK), and 272–279 (KRQLTWFR).

It belongs to the IPP transferase family. Monomer. Mg(2+) serves as cofactor.

It carries out the reaction adenosine(37) in tRNA + dimethylallyl diphosphate = N(6)-dimethylallyladenosine(37) in tRNA + diphosphate. Catalyzes the transfer of a dimethylallyl group onto the adenine at position 37 in tRNAs that read codons beginning with uridine, leading to the formation of N6-(dimethylallyl)adenosine (i(6)A). This chain is tRNA dimethylallyltransferase (miaA), found in Halalkalibacterium halodurans (strain ATCC BAA-125 / DSM 18197 / FERM 7344 / JCM 9153 / C-125) (Bacillus halodurans).